The chain runs to 218 residues: External core antigen (218 aa).

The first 19 residues, 1–19 (MYLFHLCLVFACVPCPTFQ), serve as a signal peptide directing secretion. Residues 26 to 28 (GWL) form an HBEAG region. A compositionally biased stretch (basic residues) spans 180–211 (RRRGGARASRSPRRRTPSPRRRRSQSPRRRRS). The disordered stretch occupies residues 180-218 (RRRGGARASRSPRRRTPSPRRRRSQSPRRRRSQSPSANC). One copy of the 1; half-length repeat lies at 190–196 (SPRRRTP). The segment at 190–212 (SPRRRTPSPRRRRSQSPRRRRSQ) is 3 X 8 AA repeats of S-P-R-R-R-R-S-Q. The propeptide occupies 190-218 (SPRRRTPSPRRRRSQSPRRRRSQSPSANC). 2 repeat units span residues 197–204 (SPRRRRSQ) and 205–212 (SPRRRRSQ).

Belongs to the orthohepadnavirus precore antigen family. As to quaternary structure, homodimerizes. Phosphorylated. Post-translationally, cleaved by host furin.

Its subcellular location is the secreted. It is found in the host nucleus. In terms of biological role, may regulate immune response to the intracellular capsid in acting as a T-cell tolerogen, by having an immunoregulatory effect which prevents destruction of infected cells by cytotoxic T-cells. This immune regulation may predispose to chronicity during perinatal infections and prevent severe liver injury during adult infections. This Marmota monax (Woodchuck) protein is External core antigen.